Reading from the N-terminus, the 90-residue chain is Small ribosomal subunit protein uS15 (90 aa).

This sequence belongs to the universal ribosomal protein uS15 family. As to quaternary structure, part of the 30S ribosomal subunit. Forms a bridge to the 50S subunit in the 70S ribosome, contacting the 23S rRNA.

Functionally, one of the primary rRNA binding proteins, it binds directly to 16S rRNA where it helps nucleate assembly of the platform of the 30S subunit by binding and bridging several RNA helices of the 16S rRNA. Its function is as follows. Forms an intersubunit bridge (bridge B4) with the 23S rRNA of the 50S subunit in the ribosome. The chain is Small ribosomal subunit protein uS15 from Wolbachia pipientis subsp. Culex pipiens (strain wPip).